The following is a 1368-amino-acid chain: Alpha-latrotoxin-Lg1a (1368 aa).

The interval 217-236 (VLYAILYGTQTYVSVMFFLL) is helix H8 is the probable transmembrane region of the tetrameric pore inserted in the target cell membrane. A disulfide bond links Cys-392 and Cys-1044. ANK repeat units follow at residues 469-500 (QGRT…DINQ), 504-533 (KGYT…SVNS), 538-568 (FLQT…NINE), 572-601 (DGFT…DVNV), 605-635 (KGLT…DINA), 639-669 (NNMT…NANA), 674-704 (GLLS…NYNL), 708-737 (GDIT…NINQ), 741-770 (EKYT…NLEA), 774-803 (TGAT…NWRE), 807-837 (NGQM…VLDI), 841-870 (NLDT…KVNT), 874-903 (KGQA…NVYI), 907-936 (DGLN…KFEW), 953-981 (ISHF…GHYS), 982-1011 (ICSP…SVDG), 1013-1042 (KPDT…KVNH), 1046-1075 (NGMT…DFRR), 1079-1109 (LDAT…NINI), and 1115-1144 (NKET…DENI). Residues 1174 to 1177 (KFRR) form a furin-like endopeptidase recognition region region. The propeptide occupies 1178-1368 (EYKSSNGEHD…GETLHLFHES (191 aa)).

The protein belongs to the cationic peptide 01 (latrotoxin) family. 03 (alpha-latrotoxin) subfamily. As to quaternary structure, homotetramer in membranes. As to expression, expressed in venom gland, cephalothorax, and abdomen tissues from both males and females.

The protein resides in the secreted. It localises to the target cell membrane. Its function is as follows. Presynaptic neurotoxin that causes massive release of neurotransmitters from vertebrate (but not invertebrate) nerve terminals and endocrine cells via a complex mechanism involving activation of receptor(s) and toxin insertion into the plasma membrane with subsequent pore formation. Binds to neurexin-1-alpha (NRXN1) in a calcium dependent manner, adhesion G protein-coupled receptor L1 (ADGRL1, also termed latrophilin-1 and calcium-independent receptor of latrotoxin (CIRL)), and receptor-type tyrosine-protein phosphatase S (PTPRS), also termed PTP sigma. NRXN1 and PTPRS are suggested to provide a platform for binding and subsequent pore formation events. In contrast, binding to ADGRL1 does not involve oligomerization and channel formation, but direct downstream stimulation of the synaptic fusion machinery. This chain is Alpha-latrotoxin-Lg1a, found in Latrodectus geometricus (Brown widow spider).